Consider the following 75-residue polypeptide: Small ribosomal subunit protein bS18 (75 aa).

It belongs to the bacterial ribosomal protein bS18 family. Part of the 30S ribosomal subunit. Forms a tight heterodimer with protein bS6.

Binds as a heterodimer with protein bS6 to the central domain of the 16S rRNA, where it helps stabilize the platform of the 30S subunit. This chain is Small ribosomal subunit protein bS18, found in Buchnera aphidicola subsp. Acyrthosiphon pisum (strain 5A).